We begin with the raw amino-acid sequence, 180 residues long: MFMNLLSQVSNAIFPQVEAAQKMSNRAVAVLRGDVVSGTIWITQNSESDPAVIEGEIKGLTPGLHGFHVHQYGDSTNGCLSAGPHFNPFGKTHGGPNSETRHVGDLGNVEAGADGVAKVHITDKLITLYGANTVIGRSMVVHAGQDDLGQGVGDKAEESAKTGNAGARAACGVIALAAPQ.

An N-terminal signal peptide occupies residues 1 to 19; sequence MFMNLLSQVSNAIFPQVEA. Cu cation-binding residues include His68, His70, and His85. An intrachain disulfide couples Cys79 to Cys171. Residues His85, His93, His102, and Asp105 each coordinate Zn(2+). His142 contacts Cu cation.

This sequence belongs to the Cu-Zn superoxide dismutase family. As to quaternary structure, homodimer. It depends on Cu cation as a cofactor. Requires Zn(2+) as cofactor.

Its subcellular location is the cytoplasm. The catalysed reaction is 2 superoxide + 2 H(+) = H2O2 + O2. Destroys radicals which are normally produced within the cells and which are toxic to biological systems. Required for normal brood size. May be involved in regulating mpk-1 phosphorylation downstream of phosphatase ptp-2 during oocyte maturation. This Caenorhabditis briggsae protein is Superoxide dismutase [Cu-Zn].